Here is a 286-residue protein sequence, read N- to C-terminus: Putative ribosome-inactivating protein (286 aa).

The N-terminal stretch at 1-21 (MNRFSVLMCLVILSIFHGVPT) is a signal peptide. N-linked (GlcNAc...) asparagine glycosylation is found at asparagine 103 and asparagine 110. The active site involves glutamate 185. Asparagine 252 is a glycosylation site (N-linked (GlcNAc...) asparagine).

Belongs to the ribosome-inactivating protein family. Type 1 RIP subfamily.

The catalysed reaction is Endohydrolysis of the N-glycosidic bond at one specific adenosine on the 28S rRNA.. The polypeptide is Putative ribosome-inactivating protein (Cucumis ficifolius (Cucumis figarei)).